Here is a 515-residue protein sequence, read N- to C-terminus: MAAVGRAGSFGSSSASGAANNASAELRAGGEEDDGQNLWSCILSEVSTRSRSKLPSGKSVLLLGEDGAGKTSLIGKIQGIEEYKKGRGMEYLYLNVHDEDRDDQTRCNVRILDGDLYHKGLLKFAMEANSLKDTLIMLVVDMSRPWTAMDSLQKWASVVREHIDKLKIPPEEMKEMEQKLVRDFQEYVEPGEDFPASPQRRNTSLQEDKDDSVILPLGADTLTCNLGIPVVVVCTKCDAISVLEKEHDYRDEHFDFIQSHIRRFCLQYGAALIYTSVKENKNIDLVYKYIVQKLYGFPFNVPAVVVEKDAVFIPAGWDNDKKIGILHENFQTLKAEDSFEDSIRKPPVRKFVHEKEIVAEDDQVFLMKQQSQLAKQPPTAAGRPVDASPRVPGGSPRTPNRSVTSNVASVTPIPAGSKKIDPNMKAGATSEGVLANFFNSLLSKKTGSPGGPGGVGGSPGGGSAGGTGSNLPPSAKKSGQKPVLTDVQAELDRISRKPEMVSPTSPTSPTEGEAS.

Residues 1-24 (MAAVGRAGSFGSSSASGAANNASA) show a composition bias toward low complexity. The interval 1–34 (MAAVGRAGSFGSSSASGAANNASAELRAGGEEDD) is disordered. Position 64–71 (64–71 (GEDGAGKT)) interacts with ATP. Disordered stretches follow at residues 370–424 (QSQL…DPNM) and 445–515 (KTGS…GEAS). Residues 397-409 (RTPNRSVTSNVAS) show a composition bias toward polar residues. The span at 448-468 (SPGGPGGVGGSPGGGSAGGTG) shows a compositional bias: gly residues. The segment covering 490 to 499 (ELDRISRKPE) has biased composition (basic and acidic residues). Residues 502–515 (SPTSPTSPTEGEAS) are compositionally biased toward polar residues.

The protein belongs to the dynein light intermediate chain family. As to quaternary structure, homodimer. The cytoplasmic dynein 1 complex consists of two catalytic heavy chains (HCs) and a number of non-catalytic subunits presented by intermediate chains (ICs). In terms of processing, phosphorylated.

Its subcellular location is the cytoplasm. It localises to the cytoskeleton. It is found in the chromosome. The protein localises to the centromere. The protein resides in the kinetochore. Its subcellular location is the spindle pole. It localises to the recycling endosome membrane. Acts as one of several non-catalytic accessory components of the cytoplasmic dynein 1 complex that are thought to be involved in linking dynein to cargos and to adapter proteins that regulate dynein function. Cytoplasmic dynein 1 acts as a motor for the intracellular retrograde motility of vesicles and organelles along microtubules. May play a role in binding dynein to membranous organelles or chromosomes. May regulate the movement of peripheral sorting endosomes along microtubule tracks toward the microtubule organizing center/centrosome, generating the endosomal recycling compartment. In Gallus gallus (Chicken), this protein is Cytoplasmic dynein 1 light intermediate chain 1 (DYNC1LI1).